We begin with the raw amino-acid sequence, 426 residues long: Enolase (426 aa).

Position 165 (Q165) interacts with (2R)-2-phosphoglycerate. Catalysis depends on E209, which acts as the Proton donor. Mg(2+) is bound by residues D244, E287, and D313. Positions 338, 367, 368, and 389 each coordinate (2R)-2-phosphoglycerate. The active-site Proton acceptor is the K338.

Belongs to the enolase family. The cofactor is Mg(2+).

The protein localises to the cytoplasm. Its subcellular location is the secreted. It is found in the cell surface. The enzyme catalyses (2R)-2-phosphoglycerate = phosphoenolpyruvate + H2O. It participates in carbohydrate degradation; glycolysis; pyruvate from D-glyceraldehyde 3-phosphate: step 4/5. Functionally, catalyzes the reversible conversion of 2-phosphoglycerate (2-PG) into phosphoenolpyruvate (PEP). It is essential for the degradation of carbohydrates via glycolysis. The chain is Enolase from Methanococcus maripaludis (strain C5 / ATCC BAA-1333).